A 504-amino-acid polypeptide reads, in one-letter code: 2,3-bisphosphoglycerate-independent phosphoglycerate mutase (504 aa).

Asp11 and Ser61 together coordinate Mn(2+). Residue Ser61 is the Phosphoserine intermediate of the active site. Substrate is bound by residues His122, 152–153 (RD), Arg183, Arg189, 255–258 (RNDR), and Lys329. Asp396, His400, Asp437, His438, and His455 together coordinate Mn(2+).

Belongs to the BPG-independent phosphoglycerate mutase family. As to quaternary structure, monomer. It depends on Mn(2+) as a cofactor.

The catalysed reaction is (2R)-2-phosphoglycerate = (2R)-3-phosphoglycerate. It functions in the pathway carbohydrate degradation; glycolysis; pyruvate from D-glyceraldehyde 3-phosphate: step 3/5. Its function is as follows. Catalyzes the interconversion of 2-phosphoglycerate and 3-phosphoglycerate. This chain is 2,3-bisphosphoglycerate-independent phosphoglycerate mutase, found in Bacteroides fragilis (strain ATCC 25285 / DSM 2151 / CCUG 4856 / JCM 11019 / LMG 10263 / NCTC 9343 / Onslow / VPI 2553 / EN-2).